The chain runs to 63 residues: Large ribosomal subunit protein uL29 (63 aa).

Belongs to the universal ribosomal protein uL29 family.

The polypeptide is Large ribosomal subunit protein uL29 (Actinobacillus succinogenes (strain ATCC 55618 / DSM 22257 / CCUG 43843 / 130Z)).